We begin with the raw amino-acid sequence, 511 residues long: Myrosinase 5 (511 aa).

Residues 1–23 (MAIPKAHYSLAVLVLLFVVVSSS) form the signal peptide. Disulfide bonds link Cys-31/Cys-450, Cys-39/Cys-445, and Cys-230/Cys-233. N-linked (GlcNAc...) asparagine glycosylation is found at Asn-46 and Asn-53. A beta-D-glucoside is bound by residues Gln-64, His-165, and 210 to 211 (NQ). Asn-222 is a glycosylation site (N-linked (GlcNAc...) asparagine). Positions 351 and 418 each coordinate a beta-D-glucoside. Residue Glu-418 is the Nucleophile of the active site. A glycan (N-linked (GlcNAc...) asparagine) is linked at Asn-428. Residues Trp-467, 474–475 (EF), and Phe-483 each bind a beta-D-glucoside. Asn-489 is a glycosylation site (N-linked (GlcNAc...) asparagine).

Belongs to the glycosyl hydrolase 1 family. In terms of tissue distribution, specifically expressed in roots.

It carries out the reaction a thioglucoside + H2O = a sugar + a thiol.. The catalysed reaction is Hydrolysis of terminal, non-reducing beta-D-glucosyl residues with release of beta-D-glucose.. Functionally, hydrolyzes sinigrin and, with lower efficiency, p-nitrophenyl beta-D-glucoside. The protein is Myrosinase 5 of Arabidopsis thaliana (Mouse-ear cress).